A 346-amino-acid polypeptide reads, in one-letter code: Biotin synthase (346 aa).

The 219-residue stretch at 38 to 256 (QQVQVSTLLS…IAVARIMMPT (219 aa)) folds into the Radical SAM core domain. [4Fe-4S] cluster is bound by residues cysteine 53, cysteine 57, and cysteine 60. 4 residues coordinate [2Fe-2S] cluster: cysteine 97, cysteine 128, cysteine 188, and arginine 260.

This sequence belongs to the radical SAM superfamily. Biotin synthase family. In terms of assembly, homodimer. It depends on [4Fe-4S] cluster as a cofactor. [2Fe-2S] cluster serves as cofactor.

It carries out the reaction (4R,5S)-dethiobiotin + (sulfur carrier)-SH + 2 reduced [2Fe-2S]-[ferredoxin] + 2 S-adenosyl-L-methionine = (sulfur carrier)-H + biotin + 2 5'-deoxyadenosine + 2 L-methionine + 2 oxidized [2Fe-2S]-[ferredoxin]. Its pathway is cofactor biosynthesis; biotin biosynthesis; biotin from 7,8-diaminononanoate: step 2/2. In terms of biological role, catalyzes the conversion of dethiobiotin (DTB) to biotin by the insertion of a sulfur atom into dethiobiotin via a radical-based mechanism. The polypeptide is Biotin synthase (Salmonella dublin (strain CT_02021853)).